A 227-amino-acid chain; its full sequence is Gamma-glutamyl-hercynylcysteine sulfoxide hydrolase (227 aa).

The active-site Nucleophile is cysteine 2. The 226-residue stretch at 2–227 (CRHVAWLGAP…RDAHVVVTPL (226 aa)) folds into the Glutamine amidotransferase type-2 domain.

It carries out the reaction gamma-L-glutamyl-hercynylcysteine S-oxide + H2O = S-(hercyn-2-yl)-L-cysteine S-oxide + L-glutamate. Its pathway is amino-acid biosynthesis; ergothioneine biosynthesis. Catalyzes the hydrolysis of the gamma-glutamyl amide bond of hercynyl-gamma-L-glutamyl-L-cysteine sulfoxide to produce hercynylcysteine sulfoxide, a step in the biosynthesis pathway of ergothioneine. The protein is Gamma-glutamyl-hercynylcysteine sulfoxide hydrolase of Mycolicibacterium smegmatis (strain ATCC 700084 / mc(2)155) (Mycobacterium smegmatis).